A 183-amino-acid polypeptide reads, in one-letter code: Triggering receptor expressed on myeloid cells 3 (183 aa).

Residues 1 to 19 form the signal peptide; it reads MSPLLLWLGLMLCVSGLQA. Topologically, residues 20–138 are extracellular; the sequence is GDEEEHKCFL…AWCQGKPVMV (119 aa). An Ig-like V-type domain is found at 30–128; it reads EGENLTLTCP…VIILRQRIRL (99 aa). An N-linked (GlcNAc...) asparagine glycan is attached at Asn-33. An intrachain disulfide couples Cys-38 to Cys-110. A helical membrane pass occupies residues 139 to 159; it reads IVLTCGFILNKGLVFSVLFVF. At 160–183 the chain is on the cytoplasmic side; the sequence is LCKAGPKVLQPSKTSKVQGVSEKQ.

Interacts with TYROBP/DAP12. As to expression, expressed in macrophages and in T-cells.

It is found in the cell membrane. Functionally, forms a receptor signaling complex with TYROBP/DAP12 which mediates activation of macrophages as part of the innate immune response. The chain is Triggering receptor expressed on myeloid cells 3 from Mus musculus (Mouse).